The sequence spans 122 residues: Small ribosomal subunit protein uS13 (122 aa).

Residues R93–K122 form a disordered region. The segment covering Q101–K122 has biased composition (basic residues).

It belongs to the universal ribosomal protein uS13 family. In terms of assembly, part of the 30S ribosomal subunit. Forms a loose heterodimer with protein S19. Forms two bridges to the 50S subunit in the 70S ribosome.

Its function is as follows. Located at the top of the head of the 30S subunit, it contacts several helices of the 16S rRNA. In the 70S ribosome it contacts the 23S rRNA (bridge B1a) and protein L5 of the 50S subunit (bridge B1b), connecting the 2 subunits; these bridges are implicated in subunit movement. Contacts the tRNAs in the A and P-sites. This is Small ribosomal subunit protein uS13 from Chlamydia abortus (strain DSM 27085 / S26/3) (Chlamydophila abortus).